Reading from the N-terminus, the 341-residue chain is Sulfate/thiosulfate import ATP-binding protein CysA 2 (341 aa).

In terms of domain architecture, ABC transporter spans 3-235 (IRLENVVKTF…PNSSFVMRFL (233 aa)). ATP is bound at residue 35–42 (GPSGSGKT).

Belongs to the ABC transporter superfamily. Sulfate/tungstate importer (TC 3.A.1.6) family. As to quaternary structure, the complex is composed of two ATP-binding proteins (CysA), two transmembrane proteins (CysT and CysW) and a solute-binding protein (CysP).

Its subcellular location is the cell inner membrane. It carries out the reaction sulfate(out) + ATP + H2O = sulfate(in) + ADP + phosphate + H(+). The enzyme catalyses thiosulfate(out) + ATP + H2O = thiosulfate(in) + ADP + phosphate + H(+). Functionally, part of the ABC transporter complex CysAWTP involved in sulfate/thiosulfate import. Responsible for energy coupling to the transport system. This Agrobacterium fabrum (strain C58 / ATCC 33970) (Agrobacterium tumefaciens (strain C58)) protein is Sulfate/thiosulfate import ATP-binding protein CysA 2.